We begin with the raw amino-acid sequence, 67 residues long: Pepsin B (67 aa).

A propeptide spans Met-1–Asp-43 (activation peptide).

Belongs to the peptidase A1 family.

The protein localises to the secreted. The enzyme catalyses Degradation of gelatin, little activity on hemoglobin. Specificity on B chain of insulin more restricted than that of pepsin A. Does not cleave 1-Phe-|-Val-2, 4-Gln-|-His-5 or 23-Gly-|-Phe-24.. This chain is Pepsin B (PGB), found in Sus scrofa (Pig).